The following is a 533-amino-acid chain: Glycogen synthase (533 aa).

Lysine 12 is a binding site for ADP-alpha-D-glucose. The disordered stretch occupies residues 497-533 (AALARADAASGRRRRAPEQSERLRQERLARQVALASK). Basic and acidic residues predominate over residues 512 to 525 (APEQSERLRQERLA).

The protein belongs to the glycosyltransferase 1 family. Bacterial/plant glycogen synthase subfamily.

The enzyme catalyses [(1-&gt;4)-alpha-D-glucosyl](n) + ADP-alpha-D-glucose = [(1-&gt;4)-alpha-D-glucosyl](n+1) + ADP + H(+). It functions in the pathway glycan biosynthesis; glycogen biosynthesis. Synthesizes alpha-1,4-glucan chains using ADP-glucose. The protein is Glycogen synthase of Burkholderia thailandensis (strain ATCC 700388 / DSM 13276 / CCUG 48851 / CIP 106301 / E264).